We begin with the raw amino-acid sequence, 356 residues long: Zinc finger protein 830 (356 aa).

A coiled-coil region spans residues 11-33 (AQEELRKLMKAKQRESSSKKRIE). A C2H2-type zinc finger spans residues 47–69 (CVVCNSLIKSELLWPAHILGKQH). The tract at residues 71–195 (EKVAELKGTK…PTSSADNLPA (125 aa)) is disordered. Positions 80–90 (KATTSSPSNTI) are enriched in polar residues. 2 stretches are compositionally biased toward basic and acidic residues: residues 99–118 (KGSEPEKQESKRTKGSEDHP) and 125–135 (LPEEFFEKEKT). The segment covering 150–165 (DYEDVDDDDAEEGEEY) has biased composition (acidic residues). A coiled-coil region spans residues 278–322 (AEEDEEGRLDRQIDEIDEQIQCYRRVEHLRDRKDTLQDAKMEVLK).

The protein localises to the nucleus. It localises to the chromosome. The protein resides in the nucleus speckle. In terms of biological role, may act as an important regulator of the cell cycle that participates in the maintenance of genome integrity. This is Zinc finger protein 830 from Xenopus laevis (African clawed frog).